Consider the following 535-residue polypeptide: Cytochrome c oxidase subunit 1 (535 aa).

The chain crosses the membrane as a helical span at residues 21 to 43; that stretch reads VLYFIFALFSAMIGTGLSAIIRL. Ca(2+) contacts are provided by E44 and G49. A run of 6 helical transmembrane segments spans residues 63–85, 106–128, 153–175, 188–210, 242–264, and 271–293; these read VITAHAILMIFFFVMPALVGGFG, ISFWLLVPSLILILTSALVEAGA, IFSLHLSGFSSLLGAINFITTFI, PLFAWAVLFTAILLLLSLPVLAA, YWWNHPEVYILIIPGFGIISHAV, and PVFGVQGMIYAMWSIGLLGFCVW. Fe(II)-heme a is bound at residue H67. H246 provides a ligand contact to Cu cation. The 1'-histidyl-3'-tyrosine (His-Tyr) cross-link spans 246-250; it reads HPEVY. Y250 provides a ligand contact to O2. Cu cation is bound by residues H295 and H296. The next 2 membrane-spanning stretches (helical) occupy residues 308–330 and 342–364; these read AYFTSATMVIAVPTSIKIFSWLA and TALFALGFIFLFTIGGLTGVVLA. Mg(2+) contacts are provided by H373 and D374. The next 3 membrane-spanning stretches (helical) occupy residues 379 to 401, 414 to 436, and 456 to 478; these read VAHFHYVLSMGAVFSIFCGWYLW, LSHIHFWLMFIGVNVTFFPMHFL, and NQVASLGSIISIVASIVFIYVVY. Residue H381 coordinates heme a3. H383 contributes to the Fe(II)-heme a binding site.

This sequence belongs to the heme-copper respiratory oxidase family. As to quaternary structure, component of the cytochrome c oxidase (complex IV, CIV), a multisubunit enzyme composed of a catalytic core of 3 subunits and several supernumerary subunits. The complex exists as a monomer or a dimer and forms supercomplexes (SCs) in the inner mitochondrial membrane with ubiquinol-cytochrome c oxidoreductase (cytochrome b-c1 complex, complex III, CIII). Heme serves as cofactor. The cofactor is Cu cation.

Its subcellular location is the mitochondrion inner membrane. It catalyses the reaction 4 Fe(II)-[cytochrome c] + O2 + 8 H(+)(in) = 4 Fe(III)-[cytochrome c] + 2 H2O + 4 H(+)(out). The protein operates within energy metabolism; oxidative phosphorylation. Its function is as follows. Component of the cytochrome c oxidase, the last enzyme in the mitochondrial electron transport chain which drives oxidative phosphorylation. The respiratory chain contains 3 multisubunit complexes succinate dehydrogenase (complex II, CII), ubiquinol-cytochrome c oxidoreductase (cytochrome b-c1 complex, complex III, CIII) and cytochrome c oxidase (complex IV, CIV), that cooperate to transfer electrons derived from NADH and succinate to molecular oxygen, creating an electrochemical gradient over the inner membrane that drives transmembrane transport and the ATP synthase. Cytochrome c oxidase is the component of the respiratory chain that catalyzes the reduction of oxygen to water. Electrons originating from reduced cytochrome c in the intermembrane space (IMS) are transferred via the dinuclear copper A center (CU(A)) of subunit 2 and heme A of subunit 1 to the active site in subunit 1, a binuclear center (BNC) formed by heme A3 and copper B (CU(B)). The BNC reduces molecular oxygen to 2 water molecules using 4 electrons from cytochrome c in the IMS and 4 protons from the mitochondrial matrix. This chain is Cytochrome c oxidase subunit 1 (COX1), found in Yarrowia lipolytica (strain CLIB 122 / E 150) (Yeast).